The sequence spans 298 residues: 4-hydroxy-tetrahydrodipicolinate synthase (298 aa).

Thr51 contributes to the pyruvate binding site. The Proton donor/acceptor role is filled by Tyr139. Lys167 (schiff-base intermediate with substrate) is an active-site residue. Ile209 provides a ligand contact to pyruvate.

The protein belongs to the DapA family. As to quaternary structure, homotetramer; dimer of dimers.

Its subcellular location is the cytoplasm. The enzyme catalyses L-aspartate 4-semialdehyde + pyruvate = (2S,4S)-4-hydroxy-2,3,4,5-tetrahydrodipicolinate + H2O + H(+). Its pathway is amino-acid biosynthesis; L-lysine biosynthesis via DAP pathway; (S)-tetrahydrodipicolinate from L-aspartate: step 3/4. Its function is as follows. Catalyzes the condensation of (S)-aspartate-beta-semialdehyde [(S)-ASA] and pyruvate to 4-hydroxy-tetrahydrodipicolinate (HTPA). This is 4-hydroxy-tetrahydrodipicolinate synthase from Pasteurella multocida (strain Pm70).